The primary structure comprises 147 residues: 3-dehydroquinate dehydratase (147 aa).

Y23 functions as the Proton acceptor in the catalytic mechanism. Substrate-binding residues include N75, H81, and D88. The active-site Proton donor is H101. Substrate is bound by residues 102–103 (LS) and R112.

The protein belongs to the type-II 3-dehydroquinase family. As to quaternary structure, homododecamer.

It carries out the reaction 3-dehydroquinate = 3-dehydroshikimate + H2O. It functions in the pathway metabolic intermediate biosynthesis; chorismate biosynthesis; chorismate from D-erythrose 4-phosphate and phosphoenolpyruvate: step 3/7. Functionally, catalyzes a trans-dehydration via an enolate intermediate. This chain is 3-dehydroquinate dehydratase, found in Hahella chejuensis (strain KCTC 2396).